The chain runs to 98 residues: Keratinocyte differentiation-associated protein (98 aa).

An N-terminal signal peptide occupies residues 1 to 22; it reads MKIPILPIVALLSLLALHAAQG.

Ubiquitously expressed in stratified epithelium.

The protein resides in the secreted. Functionally, may act as a soluble regulator of keratinocyte differentiation. May play an important role in embryonic skin morphogenesis. This Rattus norvegicus (Rat) protein is Keratinocyte differentiation-associated protein.